The primary structure comprises 237 residues: Phosphoadenosine 5'-phosphosulfate reductase (237 aa).

Catalysis depends on C231, which acts as the Nucleophile; cysteine thiosulfonate intermediate.

It belongs to the PAPS reductase family. CysH subfamily.

It localises to the cytoplasm. The enzyme catalyses [thioredoxin]-disulfide + sulfite + adenosine 3',5'-bisphosphate + 2 H(+) = [thioredoxin]-dithiol + 3'-phosphoadenylyl sulfate. Its pathway is sulfur metabolism; hydrogen sulfide biosynthesis; sulfite from sulfate: step 3/3. In terms of biological role, catalyzes the formation of sulfite from phosphoadenosine 5'-phosphosulfate (PAPS) using thioredoxin as an electron donor. The polypeptide is Phosphoadenosine 5'-phosphosulfate reductase (Xylella fastidiosa (strain 9a5c)).